The sequence spans 117 residues: Prefoldin subunit beta (117 aa).

Belongs to the prefoldin subunit beta family. As to quaternary structure, heterohexamer of two alpha and four beta subunits.

The protein localises to the cytoplasm. Molecular chaperone capable of stabilizing a range of proteins. Seems to fulfill an ATP-independent, HSP70-like function in archaeal de novo protein folding. The polypeptide is Prefoldin subunit beta (Pyrococcus furiosus (strain ATCC 43587 / DSM 3638 / JCM 8422 / Vc1)).